The primary structure comprises 159 residues: Aphid transmission protein (159 aa).

Belongs to the caulimoviridae ORF II family.

Functionally, this protein is involved in virus transmission. The sequence is that of Aphid transmission protein from Arabidopsis thaliana (Mouse-ear cress).